We begin with the raw amino-acid sequence, 130 residues long: Small ribosomal subunit protein uS11 (130 aa).

Belongs to the universal ribosomal protein uS11 family. Part of the 30S ribosomal subunit. Interacts with proteins S7 and S18. Binds to IF-3.

Located on the platform of the 30S subunit, it bridges several disparate RNA helices of the 16S rRNA. Forms part of the Shine-Dalgarno cleft in the 70S ribosome. The chain is Small ribosomal subunit protein uS11 from Caldanaerobacter subterraneus subsp. tengcongensis (strain DSM 15242 / JCM 11007 / NBRC 100824 / MB4) (Thermoanaerobacter tengcongensis).